We begin with the raw amino-acid sequence, 824 residues long: Intraflagellar transport protein 88 homolog (824 aa).

The interval 113–134 (FDPLSQSRGPASPLEAKKKDSP) is disordered. 12 TPR repeats span residues 197 to 230 (YSVL…KMFS), 233 to 266 (GILK…VPSV), 272 to 305 (IKIM…APNL), 307 to 338 (AGYN…PLEI), 415 to 448 (NDLE…DSRV), 450 to 483 (SAAA…DRYN), 484 to 517 (PAAL…DSSC), 518 to 551 (TEAL…LRNS), 552 to 585 (AEVL…IPTD), 586 to 619 (PQVL…FPCN), 620 to 653 (IEVI…QPTQ), and 654 to 687 (VKWQ…FPEN). The disordered stretch occupies residues 724 to 824 (EQRIKSGRDG…EELGDDLLPE (101 aa)). A compositionally biased stretch (polar residues) spans 748-757 (DSGQNYSASS). The span at 797–808 (ERPKTAAKKRID) shows a compositional bias: basic and acidic residues. A compositionally biased stretch (acidic residues) spans 809 to 824 (EDDFADEELGDDLLPE).

In terms of assembly, component of the IFT complex B, at least composed of IFT20, IFT22, IFT25, IFT27, IFT46, IFT52, TRAF3IP1/IFT54, IFT57, IFT74, IFT80, IFT81, and IFT88. Interacts with IFT20, IFT22, IFT25, IFT27, IFT52, TRAF3IP1, IFT74, IFT80 and IFT81. Interacts with IFT172. Interacts with IFT57. Interacts with IFT46. Interacts with IFT70B. Interacts with C2CD3. Interacts with ENTR1 (via N-terminus). Interacts with LRRC56. Interacts with DZIP1. Interacts with CCDC38. Interacts with CCDC146. Interacts with CFAP53. As to expression, expressed in the heart, brain, liver, lung, kidney, skeletal muscle and pancreas.

It is found in the cytoplasm. The protein resides in the cytoskeleton. It localises to the microtubule organizing center. The protein localises to the centrosome. Its subcellular location is the centriole. It is found in the cell projection. The protein resides in the cilium. It localises to the cilium basal body. The protein localises to the flagellum. Functionally, positively regulates primary cilium biogenesis. Also involved in autophagy since it is required for trafficking of ATG16L and the expansion of the autophagic compartment. The chain is Intraflagellar transport protein 88 homolog (IFT88) from Homo sapiens (Human).